The primary structure comprises 316 residues: Olfactory receptor 4N4 (316 aa).

Topologically, residues M1 to L25 are extracellular. Residue N5 is glycosylated (N-linked (GlcNAc...) asparagine). The helical transmembrane segment at L26–I49 threads the bilayer. Residues R50 to A57 are Cytoplasmic-facing. A helical transmembrane segment spans residues P58–P79. Residues R80 to Q100 are Extracellular-facing. C97 and C189 are disulfide-bonded. Residues L101 to F120 form a helical membrane-spanning segment. Residues D121–R139 lie on the Cytoplasmic side of the membrane. The chain crosses the membrane as a helical span at residues A140 to I158. The Extracellular segment spans residues Q159–V195. Residues E196 to A219 traverse the membrane as a helical segment. At V220–K235 the chain is on the cytoplasmic side. The chain crosses the membrane as a helical span at residues A236–Y258. The Extracellular segment spans residues M259–K269. The chain crosses the membrane as a helical span at residues M270–L289. The Cytoplasmic segment spans residues R290 to N316.

It belongs to the G-protein coupled receptor 1 family.

Its subcellular location is the cell membrane. Functionally, odorant receptor. In Homo sapiens (Human), this protein is Olfactory receptor 4N4 (OR4N4).